Reading from the N-terminus, the 649-residue chain is Glycerol-3-phosphate dehydrogenase, mitochondrial (649 aa).

Aspartate 69–glutamate 97 is a binding site for FAD.

It belongs to the FAD-dependent glycerol-3-phosphate dehydrogenase family. FAD serves as cofactor.

It localises to the mitochondrion. It carries out the reaction a quinone + sn-glycerol 3-phosphate = dihydroxyacetone phosphate + a quinol. It functions in the pathway polyol metabolism; glycerol degradation via glycerol kinase pathway; glycerone phosphate from sn-glycerol 3-phosphate (anaerobic route): step 1/1. The chain is Glycerol-3-phosphate dehydrogenase, mitochondrial (gut2) from Schizosaccharomyces pombe (strain 972 / ATCC 24843) (Fission yeast).